A 144-amino-acid chain; its full sequence is UPF0306 protein ESA_03544 (144 aa).

Belongs to the UPF0306 family.

This Cronobacter sakazakii (strain ATCC BAA-894) (Enterobacter sakazakii) protein is UPF0306 protein ESA_03544.